Consider the following 666-residue polypeptide: tRNA 5-methylaminomethyl-2-thiouridine biosynthesis bifunctional protein MnmC (666 aa).

Residues 1 to 245 are tRNA (mnm(5)s(2)U34)-methyltransferase; the sequence is MKQYAIQPAT…KREMLCGVME (245 aa). Residues 270–666 are FAD-dependent cmnm(5)s(2)U34 oxidoreductase; it reads IGGGIASALL…RKLLKGKAVK (397 aa).

The protein in the N-terminal section; belongs to the methyltransferase superfamily. tRNA (mnm(5)s(2)U34)-methyltransferase family. This sequence in the C-terminal section; belongs to the DAO family. FAD is required as a cofactor.

The protein resides in the cytoplasm. The catalysed reaction is 5-aminomethyl-2-thiouridine(34) in tRNA + S-adenosyl-L-methionine = 5-methylaminomethyl-2-thiouridine(34) in tRNA + S-adenosyl-L-homocysteine + H(+). Its function is as follows. Catalyzes the last two steps in the biosynthesis of 5-methylaminomethyl-2-thiouridine (mnm(5)s(2)U) at the wobble position (U34) in tRNA. Catalyzes the FAD-dependent demodification of cmnm(5)s(2)U34 to nm(5)s(2)U34, followed by the transfer of a methyl group from S-adenosyl-L-methionine to nm(5)s(2)U34, to form mnm(5)s(2)U34. This Salmonella paratyphi A (strain ATCC 9150 / SARB42) protein is tRNA 5-methylaminomethyl-2-thiouridine biosynthesis bifunctional protein MnmC.